Consider the following 513-residue polypeptide: Ribonuclease Y (513 aa).

A helical membrane pass occupies residues 6 to 26; sequence YIIIAVVIIIICVILGLYVVD. The disordered stretch occupies residues 35–59; the sequence is EASKEARRLKEEAERDAEAKKKEAI. The KH domain occupies 203 to 288; it reads TVHVVNLPND…EMVEKAKKEV (86 aa). Residues 329–422 enclose the HD domain; sequence VLKHSIEVSH…VQAADAISAA (94 aa).

Belongs to the RNase Y family.

It is found in the cell membrane. In terms of biological role, endoribonuclease that initiates mRNA decay. This is Ribonuclease Y from Clostridium botulinum (strain Okra / Type B1).